A 153-amino-acid chain; its full sequence is Ribonuclease VapC6 (153 aa).

In terms of domain architecture, PINc spans 6–152 (VFIDSSVMVG…EKVDFIEIIK (147 aa)). Positions 9 and 120 each coordinate Mg(2+).

Belongs to the PINc/VapC protein family. Mg(2+) serves as cofactor.

Toxic component of a type II toxin-antitoxin (TA) system. An RNase. This chain is Ribonuclease VapC6, found in Methanocaldococcus jannaschii (strain ATCC 43067 / DSM 2661 / JAL-1 / JCM 10045 / NBRC 100440) (Methanococcus jannaschii).